The following is a 275-amino-acid chain: N-(5'-phosphoribosyl)anthranilate isomerase 2, chloroplastic (275 aa).

Residues M1–S32 constitute a chloroplast transit peptide.

This sequence belongs to the TrpF family. As to expression, expressed in roots and shoots.

Its subcellular location is the plastid. The protein localises to the chloroplast. The catalysed reaction is N-(5-phospho-beta-D-ribosyl)anthranilate = 1-(2-carboxyphenylamino)-1-deoxy-D-ribulose 5-phosphate. It functions in the pathway amino-acid biosynthesis; L-tryptophan biosynthesis; L-tryptophan from chorismate: step 3/5. This is N-(5'-phosphoribosyl)anthranilate isomerase 2, chloroplastic (PAI2) from Arabidopsis thaliana (Mouse-ear cress).